A 320-amino-acid polypeptide reads, in one-letter code: Methionyl-tRNA formyltransferase (320 aa).

A (6S)-5,6,7,8-tetrahydrofolate-binding site is contributed by 111-114; that stretch reads SLLP.

The protein belongs to the Fmt family.

It carries out the reaction L-methionyl-tRNA(fMet) + (6R)-10-formyltetrahydrofolate = N-formyl-L-methionyl-tRNA(fMet) + (6S)-5,6,7,8-tetrahydrofolate + H(+). Functionally, attaches a formyl group to the free amino group of methionyl-tRNA(fMet). The formyl group appears to play a dual role in the initiator identity of N-formylmethionyl-tRNA by promoting its recognition by IF2 and preventing the misappropriation of this tRNA by the elongation apparatus. In Pediococcus pentosaceus (strain ATCC 25745 / CCUG 21536 / LMG 10740 / 183-1w), this protein is Methionyl-tRNA formyltransferase.